A 257-amino-acid polypeptide reads, in one-letter code: Tryptophan synthase alpha chain (257 aa).

Residues Glu-47 and Asp-58 each act as proton acceptor in the active site.

The protein belongs to the TrpA family. In terms of assembly, tetramer of two alpha and two beta chains.

It catalyses the reaction (1S,2R)-1-C-(indol-3-yl)glycerol 3-phosphate + L-serine = D-glyceraldehyde 3-phosphate + L-tryptophan + H2O. It participates in amino-acid biosynthesis; L-tryptophan biosynthesis; L-tryptophan from chorismate: step 5/5. The alpha subunit is responsible for the aldol cleavage of indoleglycerol phosphate to indole and glyceraldehyde 3-phosphate. The chain is Tryptophan synthase alpha chain from Listeria monocytogenes serotype 4b (strain F2365).